We begin with the raw amino-acid sequence, 202 residues long: Small ribosomal subunit protein uS4 (202 aa).

Residues 18–42 (LPGLTRKAAKRSYPPGQHGQARRKR) form a disordered region. The 63-residue stretch at 90-152 (NRLDNVCFRL…KPSKKLAETN (63 aa)) folds into the S4 RNA-binding domain.

This sequence belongs to the universal ribosomal protein uS4 family. Part of the 30S ribosomal subunit. Contacts protein S5. The interaction surface between S4 and S5 is involved in control of translational fidelity.

In terms of biological role, one of the primary rRNA binding proteins, it binds directly to 16S rRNA where it nucleates assembly of the body of the 30S subunit. Functionally, with S5 and S12 plays an important role in translational accuracy. In Synechococcus sp. (strain RCC307), this protein is Small ribosomal subunit protein uS4.